The chain runs to 484 residues: 6-phosphogluconate dehydrogenase, decarboxylating (484 aa).

Residues 11–16 (GLAVMG), 34–36 (NRT), 76–78 (VRA), and Asn-104 contribute to the NADP(+) site. Residues Asn-104 and 130 to 132 (SGG) contribute to the substrate site. Lys-185 functions as the Proton acceptor in the catalytic mechanism. 188–189 (HN) contacts substrate. Glu-192 acts as the Proton donor in catalysis. Residues Tyr-193, Lys-262, Arg-289, Arg-447, and His-453 each coordinate substrate.

Belongs to the 6-phosphogluconate dehydrogenase family. As to quaternary structure, homodimer.

The catalysed reaction is 6-phospho-D-gluconate + NADP(+) = D-ribulose 5-phosphate + CO2 + NADPH. The protein operates within carbohydrate degradation; pentose phosphate pathway; D-ribulose 5-phosphate from D-glucose 6-phosphate (oxidative stage): step 3/3. Its function is as follows. Catalyzes the oxidative decarboxylation of 6-phosphogluconate to ribulose 5-phosphate and CO(2), with concomitant reduction of NADP to NADPH. The sequence is that of 6-phosphogluconate dehydrogenase, decarboxylating (gnd) from Haemophilus ducreyi (strain 35000HP / ATCC 700724).